Reading from the N-terminus, the 986-residue chain is Translation initiation factor IF-2 (986 aa).

A compositionally biased stretch (basic and acidic residues) spans 49 to 59 (EFAKDNAKGDS). The interval 49 to 370 (EFAKDNAKGD…KNRLAKRHEY (322 aa)) is disordered. The span at 60 to 112 (KPASSAQKPAAKPVQQRRPAAPSAPASTSSSAPTPAAPARQASPASAHQQAPT) shows a compositional bias: low complexity. The span at 135-168 (GQHDNRENGRDNREGRENGRQSRPNDRRNNDRRN) shows a compositional bias: basic and acidic residues. Positions 170–182 (QGRPNNGQPGQHQ) are enriched in low complexity. 2 stretches are compositionally biased toward gly residues: residues 254–286 (GRGGRPGRPGQGQGQGRGFRGGRPGQGGQGGPR) and 296–353 (GQGG…GRQG). Residues 357–366 (SKARKNRLAK) show a composition bias toward basic residues. The region spanning 479–651 (PRPPVVTVMG…VLLTADAELD (173 aa)) is the tr-type G domain. Residues 488–495 (GHVDHGKT) are G1. 488-495 (GHVDHGKT) is a GTP binding site. The interval 513 to 517 (GITQR) is G2. Positions 538-541 (DTPG) are G3. Residues 538 to 542 (DTPGH) and 592 to 595 (NKID) contribute to the GTP site. The tract at residues 592–595 (NKID) is G4. Residues 628 to 630 (SAK) form a G5 region.

This sequence belongs to the TRAFAC class translation factor GTPase superfamily. Classic translation factor GTPase family. IF-2 subfamily.

It is found in the cytoplasm. Its function is as follows. One of the essential components for the initiation of protein synthesis. Protects formylmethionyl-tRNA from spontaneous hydrolysis and promotes its binding to the 30S ribosomal subunits. Also involved in the hydrolysis of GTP during the formation of the 70S ribosomal complex. This is Translation initiation factor IF-2 from Bifidobacterium longum subsp. infantis (strain ATCC 15697 / DSM 20088 / JCM 1222 / NCTC 11817 / S12).